We begin with the raw amino-acid sequence, 184 residues long: Adenine phosphoribosyltransferase (184 aa).

The protein belongs to the purine/pyrimidine phosphoribosyltransferase family. As to quaternary structure, homodimer.

The protein localises to the cytoplasm. It catalyses the reaction AMP + diphosphate = 5-phospho-alpha-D-ribose 1-diphosphate + adenine. It participates in purine metabolism; AMP biosynthesis via salvage pathway; AMP from adenine: step 1/1. Functionally, catalyzes a salvage reaction resulting in the formation of AMP, that is energically less costly than de novo synthesis. The sequence is that of Adenine phosphoribosyltransferase from Parafrankia sp. (strain EAN1pec).